The primary structure comprises 273 residues: MIVVQVSDTHIKSKGKLAYNKVDIHKALYNCILHINNLKPKPDLVIFTGDITDNGTNEEYKLFKETVKLLDVPFYVIPGNHDNAENLKREFEEYDWFEENNHLSLVIEDFPIRIIGLDSSIKGKSYGGLSEERLLWLEKQLNKFPDKKVLLFIHHPPVKIGIEHMDVQNLQIGRERLADLLGKYEQVLALACGHVHRVSTTLWNKIIVLTAASPSHQVALDLRKDAKAEFVMEPPSVQLHYWTEEQGLTTHTSYIGKFEGPYPFYNEKGELID.

D8, H10, D50, N80, H154, H194, and H196 together coordinate Fe cation.

This sequence belongs to the cyclic nucleotide phosphodiesterase class-III family. The cofactor is Fe(2+).

It carries out the reaction a sn-glycero-3-phosphodiester + H2O = an alcohol + sn-glycerol 3-phosphate + H(+). The enzyme catalyses sn-glycero-3-phosphoethanolamine + H2O = ethanolamine + sn-glycerol 3-phosphate + H(+). Functionally, catalyzes the hydrolysis of the 3'-5' phosphodiester bond of glycerophosphodiesters such as glycerophosphorylethanolamine (GPE), a typical phospholipid metabolite. The sequence is that of Probable glycerophosphodiester phosphodiesterase GpdQ from Arcobacter nitrofigilis (strain ATCC 33309 / DSM 7299 / CCUG 15893 / LMG 7604 / NCTC 12251 / CI) (Campylobacter nitrofigilis).